We begin with the raw amino-acid sequence, 177 residues long: ATP synthase subunit delta (177 aa).

The protein belongs to the ATPase delta chain family. As to quaternary structure, F-type ATPases have 2 components, F(1) - the catalytic core - and F(0) - the membrane proton channel. F(1) has five subunits: alpha(3), beta(3), gamma(1), delta(1), epsilon(1). F(0) has three main subunits: a(1), b(2) and c(10-14). The alpha and beta chains form an alternating ring which encloses part of the gamma chain. F(1) is attached to F(0) by a central stalk formed by the gamma and epsilon chains, while a peripheral stalk is formed by the delta and b chains.

It localises to the cell inner membrane. Functionally, f(1)F(0) ATP synthase produces ATP from ADP in the presence of a proton or sodium gradient. F-type ATPases consist of two structural domains, F(1) containing the extramembraneous catalytic core and F(0) containing the membrane proton channel, linked together by a central stalk and a peripheral stalk. During catalysis, ATP synthesis in the catalytic domain of F(1) is coupled via a rotary mechanism of the central stalk subunits to proton translocation. In terms of biological role, this protein is part of the stalk that links CF(0) to CF(1). It either transmits conformational changes from CF(0) to CF(1) or is implicated in proton conduction. The polypeptide is ATP synthase subunit delta (Yersinia enterocolitica serotype O:8 / biotype 1B (strain NCTC 13174 / 8081)).